The chain runs to 600 residues: Terpenoid synthase 8 (600 aa).

Asp352, Asp356, Asn497, and Asp505 together coordinate Mg(2+). Residues Asp352–Asp356 carry the DDXXD motif motif.

The protein belongs to the terpene synthase family. Tpsa subfamily. Mg(2+) is required as a cofactor. Requires Mn(2+) as cofactor. Stele, and tips of primary and secondary root.

It is found in the plastid. It catalyses the reaction (2E,6E,10E)-geranylgeranyl diphosphate = rhizathalene A + diphosphate. It participates in secondary metabolite biosynthesis; terpenoid biosynthesis. Catalyzes the synthesis of the semivolatile diterpene rhizatalene A. In Arabidopsis thaliana (Mouse-ear cress), this protein is Terpenoid synthase 8 (TPS08).